We begin with the raw amino-acid sequence, 276 residues long: Urease accessory protein UreD (276 aa).

This sequence belongs to the UreD family. As to quaternary structure, ureD, UreF and UreG form a complex that acts as a GTP-hydrolysis-dependent molecular chaperone, activating the urease apoprotein by helping to assemble the nickel containing metallocenter of UreC. The UreE protein probably delivers the nickel.

Its subcellular location is the cytoplasm. Required for maturation of urease via the functional incorporation of the urease nickel metallocenter. The polypeptide is Urease accessory protein UreD (Albidiferax ferrireducens (strain ATCC BAA-621 / DSM 15236 / T118) (Rhodoferax ferrireducens)).